The following is a 120-amino-acid chain: Glycophorin-A (120 aa).

The residue at position 1 (glutamine 1) is a Pyrrolidone carboxylic acid. The tract at residues 1 to 40 is disordered; the sequence is QTIATGSPPIAGTSDLSTITSAATPTFTTEQDGREQGDGL. O-linked (GalNAc...) threonine glycans are attached at residues threonine 2 and threonine 5. A glycan (O-linked (GalNAc...) serine) is linked at serine 7. O-linked (GalNAc...) threonine glycosylation occurs at threonine 13. O-linked (GalNAc...) serine glycosylation is present at serine 17. Positions 17–29 are enriched in low complexity; that stretch reads STITSAATPTFTT. Threonine 18 and threonine 20 each carry an O-linked (GalNAc...) threonine glycan. O-linked (GalNAc...) serine glycosylation is present at serine 21. Residues threonine 24 and threonine 28 are each glycosylated (O-linked (GalNAc...) threonine). The chain crosses the membrane as a helical span at residues 50-72; that stretch reads VITVIILGVMAGIIGIILLLAYV. A disordered region spans residues 78–120; that stretch reads KRPPADVPPPASTVPSADAPPPVSEDDETSLTSVETDYPGDSQ. Residues 82–100 are compositionally biased toward pro residues; it reads ADVPPPASTVPSADAPPPV. Residues 107-120 are compositionally biased toward polar residues; the sequence is SLTSVETDYPGDSQ. A Phosphoserine modification is found at serine 119.

The protein belongs to the glycophorin-A family. As to quaternary structure, homodimer.

It is found in the membrane. In terms of biological role, glycophorin A is the major intrinsic membrane sialoglycoprotein of the erythrocyte. Appears to be important for the function of SLC4A1 and is required for high activity of SLC4A1. May be involved in translocation of SLC4A1 to the plasma membrane. This chain is Glycophorin-A, found in Equus caballus (Horse).